The following is a 318-amino-acid chain: Trans-prenyltransferase (318 aa).

A helical membrane pass occupies residues 1-21 (MLHLIYISIIVVLIIILISYT). Residues lysine 85, arginine 88, and histidine 122 each contribute to the isopentenyl diphosphate site. Residues aspartate 129 and aspartate 135 each coordinate Mg(2+). Residue arginine 140 coordinates dimethylallyl diphosphate. Position 141 (arginine 141) interacts with isopentenyl diphosphate. 3 residues coordinate dimethylallyl diphosphate: lysine 216, threonine 217, and glutamine 254.

Belongs to the FPP/GGPP synthase family. Asfivirus trans-prenyltransferase subfamily. The cofactor is Mg(2+).

It is found in the host endoplasmic reticulum. Its subcellular location is the host membrane. It catalyses the reaction isopentenyl diphosphate + dimethylallyl diphosphate = (2E)-geranyl diphosphate + diphosphate. It carries out the reaction isopentenyl diphosphate + (2E)-geranyl diphosphate = (2E,6E)-farnesyl diphosphate + diphosphate. The enzyme catalyses isopentenyl diphosphate + (2E,6E)-farnesyl diphosphate = (2E,6E,10E)-geranylgeranyl diphosphate + diphosphate. The catalysed reaction is isopentenyl diphosphate + (2E,6E,10E)-geranylgeranyl diphosphate = (2E,6E,10E,14E)-geranylfarnesyl diphosphate + diphosphate. It functions in the pathway isoprenoid biosynthesis; farnesyl diphosphate biosynthesis; farnesyl diphosphate from geranyl diphosphate and isopentenyl diphosphate: step 1/1. Its pathway is isoprenoid biosynthesis; geranyl diphosphate biosynthesis; geranyl diphosphate from dimethylallyl diphosphate and isopentenyl diphosphate: step 1/1. It participates in isoprenoid biosynthesis; geranylgeranyl diphosphate biosynthesis; geranylgeranyl diphosphate from farnesyl diphosphate and isopentenyl diphosphate: step 1/1. Trans-prenyltransferase that catalyzes the sequential condensation of isopentenyl diphosphate (IPP) with different allylic diphosphates, such as dimethylallyl diphosphate (DMAPP), geranyl diphosphate (GPP), farnesyl diphosphate (FPP) and geranylgeranyl diphosphate (GGPP), farnesyl diphosphate being the best allylic substrate. This chain is Trans-prenyltransferase, found in Ornithodoros (relapsing fever ticks).